The chain runs to 90 residues: DNA-directed RNA polymerase subunit omega (90 aa).

The interval 69 to 90 (RQEQQEQEAAELAAVSSIAHNR) is disordered.

Belongs to the RNA polymerase subunit omega family. As to quaternary structure, the RNAP catalytic core consists of 2 alpha, 1 beta, 1 beta' and 1 omega subunit. When a sigma factor is associated with the core the holoenzyme is formed, which can initiate transcription.

The catalysed reaction is RNA(n) + a ribonucleoside 5'-triphosphate = RNA(n+1) + diphosphate. Promotes RNA polymerase assembly. Latches the N- and C-terminal regions of the beta' subunit thereby facilitating its interaction with the beta and alpha subunits. The chain is DNA-directed RNA polymerase subunit omega from Vibrio parahaemolyticus serotype O3:K6 (strain RIMD 2210633).